The primary structure comprises 252 residues: Hydroxyacylglutathione hydrolase (252 aa).

Zn(2+) is bound by residues His-54, His-56, Asp-58, His-59, His-111, Asp-130, and His-170.

Belongs to the metallo-beta-lactamase superfamily. Glyoxalase II family. In terms of assembly, monomer. Zn(2+) is required as a cofactor.

It catalyses the reaction an S-(2-hydroxyacyl)glutathione + H2O = a 2-hydroxy carboxylate + glutathione + H(+). It participates in secondary metabolite metabolism; methylglyoxal degradation; (R)-lactate from methylglyoxal: step 2/2. Thiolesterase that catalyzes the hydrolysis of S-D-lactoyl-glutathione to form glutathione and D-lactic acid. This is Hydroxyacylglutathione hydrolase from Francisella philomiragia subsp. philomiragia (strain ATCC 25017 / CCUG 19701 / FSC 153 / O#319-036).